The chain runs to 240 residues: Ribosomal RNA small subunit methyltransferase G (240 aa).

S-adenosyl-L-methionine contacts are provided by residues glycine 78, phenylalanine 83, 129–130 (AE), and arginine 147. The segment at 218 to 240 (RRQTSKKYPRKPGTPNKSPLLEN) is disordered.

This sequence belongs to the methyltransferase superfamily. RNA methyltransferase RsmG family.

It localises to the cytoplasm. Its function is as follows. Specifically methylates the N7 position of guanine in position 535 of 16S rRNA. The protein is Ribosomal RNA small subunit methyltransferase G of Staphylococcus haemolyticus (strain JCSC1435).